We begin with the raw amino-acid sequence, 219 residues long: Thiopurine S-methyltransferase (219 aa).

Positions 10, 45, 66, and 123 each coordinate S-adenosyl-L-methionine.

The protein belongs to the class I-like SAM-binding methyltransferase superfamily. TPMT family.

Its subcellular location is the cytoplasm. The catalysed reaction is S-adenosyl-L-methionine + a thiopurine = S-adenosyl-L-homocysteine + a thiopurine S-methylether.. The chain is Thiopurine S-methyltransferase from Shewanella pealeana (strain ATCC 700345 / ANG-SQ1).